The chain runs to 132 residues: Transmembrane protein 170B (132 aa).

The Extracellular segment spans residues 1–37 (MRAEGADHSMINLSVQQVLSLWAHGTVLRNLTEMWYW). N-linked (GlcNAc...) asparagine glycosylation occurs at N12. The chain crosses the membrane as a helical span at residues 38 to 58 (IFLWALFSSLFVHGAAGVLMF). The Cytoplasmic segment spans residues 59 to 68 (VMLQRHRQGR). A helical membrane pass occupies residues 69–89 (VLSIIAVSIGFLASVTGAMIT). Topologically, residues 90-104 (SAAVAGIYRVAGKNM) are extracellular. The helical transmembrane segment at 105–125 (APLEALVWGVGQTVLTLIISF) threads the bilayer. The Cytoplasmic segment spans residues 126-132 (SRILATL).

The protein belongs to the TMEM170 family. Interacts with CTNNB1.

It is found in the cell membrane. The sequence is that of Transmembrane protein 170B (Tmem170b) from Rattus norvegicus (Rat).